Consider the following 62-residue polypeptide: Beta-defensin 10 (62 aa).

Positions 1 to 22 are cleaved as a signal peptide; that stretch reads MRLHHLLLLLLLVVLSSGSGFT. Residue Gln-23 is modified to Pyrrolidone carboxylic acid. 3 cysteine pairs are disulfide-bonded: Cys-31/Cys-60, Cys-38/Cys-53, and Cys-43/Cys-61.

It belongs to the beta-defensin family. Neutrophilic granules.

It is found in the secreted. In terms of biological role, has bactericidal activity. Active against E.coli ML35 and S.aureus 502A. This Bos taurus (Bovine) protein is Beta-defensin 10 (DEFB10).